The chain runs to 278 residues: Large ribosomal subunit protein uL2 (278 aa).

2 disordered regions span residues 33–53 (LTEG…TSRG) and 219–278 (LTRG…KKKR). Basic residues predominate over residues 269–278 (IRSRHAKKKR).

The protein belongs to the universal ribosomal protein uL2 family. As to quaternary structure, part of the 50S ribosomal subunit. Forms a bridge to the 30S subunit in the 70S ribosome.

One of the primary rRNA binding proteins. Required for association of the 30S and 50S subunits to form the 70S ribosome, for tRNA binding and peptide bond formation. It has been suggested to have peptidyltransferase activity; this is somewhat controversial. Makes several contacts with the 16S rRNA in the 70S ribosome. This is Large ribosomal subunit protein uL2 from Sphingopyxis alaskensis (strain DSM 13593 / LMG 18877 / RB2256) (Sphingomonas alaskensis).